Reading from the N-terminus, the 384-residue chain is Methylthioribose-1-phosphate isomerase (384 aa).

The Proton donor role is filled by D255.

It belongs to the eIF-2B alpha/beta/delta subunits family. MtnA subfamily.

The protein resides in the cytoplasm. Its subcellular location is the nucleus. The catalysed reaction is 5-(methylsulfanyl)-alpha-D-ribose 1-phosphate = 5-(methylsulfanyl)-D-ribulose 1-phosphate. It participates in amino-acid biosynthesis; L-methionine biosynthesis via salvage pathway; L-methionine from S-methyl-5-thio-alpha-D-ribose 1-phosphate: step 1/6. Functionally, catalyzes the interconversion of methylthioribose-1-phosphate (MTR-1-P) into methylthioribulose-1-phosphate (MTRu-1-P). In Talaromyces stipitatus (strain ATCC 10500 / CBS 375.48 / QM 6759 / NRRL 1006) (Penicillium stipitatum), this protein is Methylthioribose-1-phosphate isomerase (mri1).